A 150-amino-acid polypeptide reads, in one-letter code: Globin-5 (150 aa).

The Globin domain occupies 11-150 (PLSAAEKTKI…MICILLRSAY (140 aa)). The heme b site is built by His74 and His106.

The protein belongs to the globin family. Monomer at high oxygen tension and high pH and dimeric at low oxygen tension and lower pH.

This chain is Globin-5, found in Petromyzon marinus (Sea lamprey).